Here is a 477-residue protein sequence, read N- to C-terminus: Ribulose bisphosphate carboxylase large chain (477 aa).

A propeptide spanning residues 1 to 2 (MS) is cleaved from the precursor. At Pro-3 the chain carries N-acetylproline. Position 14 is an N6,N6,N6-trimethyllysine (Lys-14). Residues Asn-123 and Thr-173 each coordinate substrate. Lys-175 (proton acceptor) is an active-site residue. Position 177 (Lys-177) interacts with substrate. Mg(2+) contacts are provided by Lys-201, Asp-203, and Glu-204. Lys-201 is modified (N6-carboxylysine). The active-site Proton acceptor is His-294. Residues Arg-295, His-327, and Ser-379 each contribute to the substrate site.

It belongs to the RuBisCO large chain family. Type I subfamily. In terms of assembly, heterohexadecamer of 8 large chains and 8 small chains; disulfide-linked. The disulfide link is formed within the large subunit homodimers. Mg(2+) serves as cofactor. The disulfide bond which can form in the large chain dimeric partners within the hexadecamer appears to be associated with oxidative stress and protein turnover.

The protein localises to the plastid. It localises to the chloroplast. The catalysed reaction is 2 (2R)-3-phosphoglycerate + 2 H(+) = D-ribulose 1,5-bisphosphate + CO2 + H2O. It catalyses the reaction D-ribulose 1,5-bisphosphate + O2 = 2-phosphoglycolate + (2R)-3-phosphoglycerate + 2 H(+). Its function is as follows. RuBisCO catalyzes two reactions: the carboxylation of D-ribulose 1,5-bisphosphate, the primary event in carbon dioxide fixation, as well as the oxidative fragmentation of the pentose substrate in the photorespiration process. Both reactions occur simultaneously and in competition at the same active site. In Agrostis stolonifera (Creeping bentgrass), this protein is Ribulose bisphosphate carboxylase large chain.